The primary structure comprises 578 residues: Hemolysin 4 (578 aa).

Residues 289–322 (KDGPKASWRRRPSSASSVTMPTTPRIIGSNARPE) are disordered. The region spanning 448–539 (RPVNLQLGGF…LSNLSAHQLL (92 aa)) is the Ricin B-type lectin domain.

This sequence belongs to the HlyA hemolysin family.

Its function is as follows. Bacterial hemolysins are exotoxins that attack blood cell membranes and cause cell rupture by mechanisms not clearly defined. This is Hemolysin 4 (ash4) from Aeromonas salmonicida.